A 194-amino-acid polypeptide reads, in one-letter code: Small ribosomal subunit protein eS7 (194 aa).

The protein belongs to the eukaryotic ribosomal protein eS7 family.

In Drosophila yakuba (Fruit fly), this protein is Small ribosomal subunit protein eS7 (RpS7).